Consider the following 409-residue polypeptide: 5-aminolevulinate synthase (409 aa).

The substrate site is built by arginine 21, serine 137, and lysine 156. Pyridoxal 5'-phosphate-binding residues include serine 189, histidine 217, and threonine 245. Residue lysine 248 is part of the active site. The residue at position 248 (lysine 248) is an N6-(pyridoxal phosphate)lysine. Pyridoxal 5'-phosphate-binding residues include threonine 277 and threonine 278. Residue threonine 365 participates in substrate binding.

Belongs to the class-II pyridoxal-phosphate-dependent aminotransferase family. In terms of assembly, homodimer. Pyridoxal 5'-phosphate serves as cofactor.

The enzyme catalyses succinyl-CoA + glycine + H(+) = 5-aminolevulinate + CO2 + CoA. The protein operates within porphyrin-containing compound metabolism; protoporphyrin-IX biosynthesis; 5-aminolevulinate from glycine: step 1/1. The sequence is that of 5-aminolevulinate synthase (hemA) from Paracoccus denitrificans (strain Pd 1222).